Here is a 265-residue protein sequence, read N- to C-terminus: Mlc titration factor A (265 aa).

Zn(2+)-binding residues include His111, His148, His152, and Glu211.

The protein belongs to the MtfA family. Interacts with Mlc with high affinity. Zn(2+) serves as cofactor.

It localises to the cytoplasm. Proteolytic activity is stimulated by interaction with Mlc. Addition of the chelators EDTA or phenanthroline significantly reduces the peptidase activity, whereas the addition of other protease inhibitors has much less effect. Its function is as follows. Involved in the modulation of the activity of the glucose-phosphotransferase system (glucose-PTS). Interacts with the transcriptional repressor Mlc, preventing its interaction with DNA and leading to the modulation of expression of genes regulated by Mlc, including ptsG, which encodes the PTS system glucose-specific EIICB component. Functionally, shows zinc-dependent metallopeptidase activity. In vitro, can cleave several artificial substrates. The greatest activity and specificity is observed for L-alanine fused to 4-nitroanilide (L-alanine-pNA). Shows significantly lower activity towards L-arginine-pNA, L-proline-pNA, hippuryl-L-phenylalanine and hippuryl-L-arginine, and cannot use FTC-casein. Mlc does not appear to be a biologically relevant peptidase substrate. Biologically relevant targets may have a function in growth transition under changing environmental conditions. The polypeptide is Mlc titration factor A (Escherichia coli (strain K12)).